The chain runs to 1379 residues: MAQTLSFNGRRRVRKFFGKIPEVAEMPNLIEVQKASYDQFLMVEEPKGGRPDEGLQAVFKSVFPITDFSGASMLEFVSYEFEPPKFDVDECRQRDLTYAAPLKVTLRLIVFDIDEDTGAKSIKDIKEQSVYMGDMPLMTNNGTFIVNGTERVIVSQMHRSPGVFFDHDKGKSHSSGKLLFAARVIPYRGSWLDIEFDAKDIVYARIDRRRKIPVTSLLMALGMDGEEILDTFYTKSLYKRDGEGWRIPFKPETLKGAKAITEMVDADTGEVVVEAGKKLTPRLLRQLSDKGLKALKAADDDLYGNYLAGDIVNYSTGEIYLEAGDEIDEKTLGIILANGFDEIPVLGIDHINVGAYIRNTLSADKNENRQDALFDIYRVMRPGEPPTMESAEAMFNSLFFDAERYDLSAVGRVKMNMRLDLTVEDTVRILRKDDILAVVRMLVELRDGKGEIDDIDNLGNRRVRSVGELMENQYRLGLLRMERAIKERMSSIEIDTVMPQDLINAKPAAAAVREFFGSSQLSQFMDQVNPLSEITHKRRLSALGPGGLTRERAGFEVRDVHPTHYGRICPIETPEGPNIGLINSLATFARVNKYGFIESPYRRIVDGRVTSDVLYLSAMEEAKYYVAQANAEMNADGSFVDEFVVCRHAGEVMLAPRDSMNLMDVSPKQVVSVAAALIPFLENDDANRALMGSNMQRQAVPLLRAEAPFVGTGMEPVVARDSGAAIGARRGGVVDQVDATRIVIRATEDLEAGKSGVDIYRLQKFQRSNQNTCVNQRPLVTVGDEVNRGDILADGPSTDLGDLALGRNALVAFMPWNGYNYEDSILLSERIVADDVFTSIHIEEFEVMARDTKLGPEEITRDIPNVSEEALKNLDEAGIVYIGAEVQPGDILVGKITPKGESPMTPEEKLLRAIFGEKASDVRDTSMRMPPGTYGTIVEVRVFNRHGVEKDERAMAIEREEIERLAKDRDDEQAILDRNVYGRLIEMLRGQASIAGPKGFKKGTELSNAVVSEYPRSQWWMFAVEDEKVQSELEALRGQYDESKSRLEQRFMDKVEKVQRGDEMPPGVMKMVKVFVAVKRKIQPGDKMAGRHGNKGVVSRIVPVEDMPFLEDGTHVDVVLNPLGVPSRMNVGQILETHLGWACAGMGRQIGELIDAYKANGNIEPLRKTIGDVVGDGPKAEQVQDFDDDSVLRLADQWKRGVSIATPVFDGANEADVNDMLRLAGLKDTGQSTLYDGRTGEQFDRQVTVGYIYMLKLNHLVDDKIHARSIGPYSLVTQQPLGGKAQFGGQRFGEMEVWALEAYGAAYTLQEMLTVKSDDVAGRTKVYEAIVRGDDTFEAGIPESFNVLVKEMRSLGLSVELENTKLDEAQAAQLPDAAE.

This sequence belongs to the RNA polymerase beta chain family. The RNAP catalytic core consists of 2 alpha, 1 beta, 1 beta' and 1 omega subunit. When a sigma factor is associated with the core the holoenzyme is formed, which can initiate transcription.

It catalyses the reaction RNA(n) + a ribonucleoside 5'-triphosphate = RNA(n+1) + diphosphate. Its function is as follows. DNA-dependent RNA polymerase catalyzes the transcription of DNA into RNA using the four ribonucleoside triphosphates as substrates. The chain is DNA-directed RNA polymerase subunit beta from Rhizobium leguminosarum bv. trifolii (strain WSM2304).